The sequence spans 475 residues: Gustatory and pheromone receptor 33a (475 aa).

Residues 1–34 lie on the Cytoplasmic side of the membrane; it reads MIQIMNWFSMVIGLIPLNRQQSETNFILDYAMMC. A helical transmembrane segment spans residues 35 to 55; the sequence is IVPIFYVACYLLINLSHIIGL. Residues 56–68 are Extracellular-facing; the sequence is CLLDSCNSVCKLS. Residues 69 to 89 form a helical membrane-spanning segment; sequence SHLFMHLGAFLYLTITLLSLY. The Cytoplasmic segment spans residues 90–128; sequence RRKEFFQQFDARLNDIDAVIQKCQRVAEMDKVKVTAVKH. Residues 129-149 form a helical membrane-spanning segment; the sequence is SVAYHFTWLFLFCVFTFALYY. Topologically, residues 150 to 158 are extracellular; the sequence is DVRSLYLTF. The chain crosses the membrane as a helical span at residues 159-179; the sequence is GNLAFIPFMVSSFPYLAGSII. The Cytoplasmic segment spans residues 180–319; it reads QGEFIYHVSV…LALSVITNGE (140 aa). Positions 243 to 281 are disordered; sequence TGFGNENKFAGEMKRQEGQQKNDDDDLDTSNDEDEDDFD. Residues 251–264 show a composition bias toward basic and acidic residues; that stretch reads FAGEMKRQEGQQKN. The segment covering 265–281 has biased composition (acidic residues); sequence DDDDLDTSNDEDEDDFD. A helical membrane pass occupies residues 320-340; it reads FGPQCVPYMAACFVVSIFGIF. At 341–357 the chain is on the extracellular side; the sequence is LETKVNFIVGGKSRLLD. Residues 358–378 form a helical membrane-spanning segment; the sequence is YMTYLYVIWSFTTMMVAYIVL. The Cytoplasmic portion of the chain corresponds to 379–441; it reads RLCCNANNHS…FNGVGLFALD (63 aa). A helical membrane pass occupies residues 442 to 462; it reads YTFIFSTVSAATSYLIVLLQF. At 463–475 the chain is on the extracellular side; that stretch reads DMTAILRNEGLMS.

The protein belongs to the insect chemoreceptor superfamily. Gustatory receptor (GR) family. Gr66a subfamily. As to expression, expressed widely in gustatory receptor neurons (GRNs) that respond to aversive chemicals. In larvae, is expressed in neurons of the terminal external chemosensory organ, and the dorsal, ventral and posterior external chemosensory organs.

The protein localises to the cell membrane. Its function is as follows. Gustatory receptor which mediates acceptance or avoidance behavior, depending on its substrates. Required for sensing all nonvolatile repulsive chemicals, including tastants, pheromones, and especially N,N-Diethyl-meta-toluamide (DEET), the most widely used insect repellent worldwide. Also functions as a pheromone receptor for a male inhibitory pheromone leading to male-male courtship suppression. The polypeptide is Gustatory and pheromone receptor 33a (Gr33a) (Drosophila melanogaster (Fruit fly)).